The chain runs to 342 residues: Tetraacyldisaccharide 4'-kinase (342 aa).

68–75 (TVGGTGKT) is an ATP binding site.

This sequence belongs to the LpxK family.

It carries out the reaction a lipid A disaccharide + ATP = a lipid IVA + ADP + H(+). The protein operates within glycolipid biosynthesis; lipid IV(A) biosynthesis; lipid IV(A) from (3R)-3-hydroxytetradecanoyl-[acyl-carrier-protein] and UDP-N-acetyl-alpha-D-glucosamine: step 6/6. Its function is as follows. Transfers the gamma-phosphate of ATP to the 4'-position of a tetraacyldisaccharide 1-phosphate intermediate (termed DS-1-P) to form tetraacyldisaccharide 1,4'-bis-phosphate (lipid IVA). The sequence is that of Tetraacyldisaccharide 4'-kinase from Burkholderia ambifaria (strain ATCC BAA-244 / DSM 16087 / CCUG 44356 / LMG 19182 / AMMD) (Burkholderia cepacia (strain AMMD)).